A 597-amino-acid chain; its full sequence is MRLFTHGQVLALLAFVNTISATPSFSTNSYPAHPAEPVSLFSQHQPQAPLGLWTRLRNSVIERVWGVPPQQRHRGGNKHQYPPFSAPASLRARYGDDVVLRFKLQTADEVKALVEASNILFLDVWSSTDEWIDIRLAKDVVPSLLGLLPKSLQTTHVPLIRDLPQTIYESYPSPSQSPSGRERGFLPSGEPSSDVTNIFFENYQPLSVIVPWMRLLASMFPSHAQFISIGSSFEGRDIPALRVGVRPANDQKPRRTLIIEGGSHAREWIGVSTVNYVAYSLITSYGKSKPISTLLEQFDFIFIPTINPDGYVYTWETDRLWRKNRQETSLPFCPGVDLDRTWGFEWNGNATGDNPCLESYGGDKPFAGVEAHQLAEWVKEQTEQRNTKFVAYMDLHSYSQQILYPYSYSCLYQPPNLENLEELAMGIAKAIRLTNRKTYAVSSACGGLMASQKKKAKPETFLRMESTGGSALDWFYHDFGVKYAYQLKLRDRGSYGFLLPRENIVPTGKEVFNAVMMLGRFLLGESNAFQELDWDAGFQRPKKDDKPILNDDDDDDADTNDDGIGRKDDSWIPDEYKGDNDRDESDGGWAFRRLRKR.

An N-terminal signal peptide occupies residues 1–21 (MRLFTHGQVLALLAFVNTISA). Residues 22–174 (TPSFSTNSYP…QTIYESYPSP (153 aa)) constitute a propeptide that is removed on maturation. The span at 170–179 (SYPSPSQSPS) shows a compositional bias: low complexity. The tract at residues 170–189 (SYPSPSQSPSGRERGFLPSG) is disordered. The Peptidase M14 domain occupies 202-522 (NYQPLSVIVP…NAVMMLGRFL (321 aa)). Residues His-264 and Glu-267 each contribute to the Zn(2+) site. Substrate is bound by residues 264-267 (HARE), Arg-322, and 339-340 (DR). Cys-333 and Cys-356 are disulfide-bonded. An N-linked (GlcNAc...) asparagine glycan is attached at Asn-349. Zn(2+) is bound at residue His-396. 397–398 (SY) contributes to the substrate binding site. Residues 543–597 (KDDKPILNDDDDDDADTNDDGIGRKDDSWIPDEYKGDNDRDESDGGWAFRRLRKR) are disordered. Residues 550–561 (NDDDDDDADTND) show a composition bias toward acidic residues. The segment covering 563–580 (GIGRKDDSWIPDEYKGDN) has biased composition (basic and acidic residues).

It belongs to the peptidase M14 family. The cofactor is Zn(2+).

It is found in the vacuole. It localises to the secreted. Its function is as follows. Inactive carboxypeptidase that may play a role in cell wall organization and biogenesis. This Ajellomyces capsulatus (strain G186AR / H82 / ATCC MYA-2454 / RMSCC 2432) (Darling's disease fungus) protein is Inactive metallocarboxypeptidase ECM14 (ECM14).